We begin with the raw amino-acid sequence, 217 residues long: Serine acetyltransferase (217 aa).

The protein belongs to the transferase hexapeptide repeat family.

The protein resides in the cytoplasm. It catalyses the reaction L-serine + acetyl-CoA = O-acetyl-L-serine + CoA. It functions in the pathway amino-acid biosynthesis; L-cysteine biosynthesis; L-cysteine from L-serine: step 1/2. Inhibited by cysteine. In terms of biological role, catalyzes the acetylation of serine by acetyl-CoA to produce O-acetylserine (OAS). This is Serine acetyltransferase from Bacillus pumilus (strain SAFR-032).